A 231-amino-acid polypeptide reads, in one-letter code: MTTKPILVALDYDNKNHALQLIDQLDPNMCRLKVGKEMFTLFGPQLVKDIHERGFDLFLDLKFHDIPNTVAKAVTAAAELGVWMTNVHASGGLAMMEAAKKALQPYGKEAPMLIAVTVLTSMSDEDLKLIGIDVPAFEHVQRLAKLTKQAELDGVVCSAQEASILKSLLGQDFKLITPGIRPVGSDVGDQHRVMTPPEALAAGADYLVIGRPITKATDPLAALQAIHQSLV.

Residues D11, K33, 60–69 (DLKFHDIPNT), T120, R181, Q190, G210, and R211 contribute to the substrate site. Catalysis depends on K62, which acts as the Proton donor.

The protein belongs to the OMP decarboxylase family. Type 1 subfamily. Homodimer.

The catalysed reaction is orotidine 5'-phosphate + H(+) = UMP + CO2. It participates in pyrimidine metabolism; UMP biosynthesis via de novo pathway; UMP from orotate: step 2/2. In terms of biological role, catalyzes the decarboxylation of orotidine 5'-monophosphate (OMP) to uridine 5'-monophosphate (UMP). The sequence is that of Orotidine 5'-phosphate decarboxylase from Shewanella oneidensis (strain ATCC 700550 / JCM 31522 / CIP 106686 / LMG 19005 / NCIMB 14063 / MR-1).